A 189-amino-acid polypeptide reads, in one-letter code: Probable nicotinate-nucleotide adenylyltransferase (189 aa).

This sequence belongs to the NadD family.

The catalysed reaction is nicotinate beta-D-ribonucleotide + ATP + H(+) = deamido-NAD(+) + diphosphate. It functions in the pathway cofactor biosynthesis; NAD(+) biosynthesis; deamido-NAD(+) from nicotinate D-ribonucleotide: step 1/1. In terms of biological role, catalyzes the reversible adenylation of nicotinate mononucleotide (NaMN) to nicotinic acid adenine dinucleotide (NaAD). This Bacillus cereus (strain AH820) protein is Probable nicotinate-nucleotide adenylyltransferase.